The sequence spans 297 residues: Phosphoribosylaminoimidazole-succinocarboxamide synthase (297 aa).

Belongs to the SAICAR synthetase family.

It catalyses the reaction 5-amino-1-(5-phospho-D-ribosyl)imidazole-4-carboxylate + L-aspartate + ATP = (2S)-2-[5-amino-1-(5-phospho-beta-D-ribosyl)imidazole-4-carboxamido]succinate + ADP + phosphate + 2 H(+). Its pathway is purine metabolism; IMP biosynthesis via de novo pathway; 5-amino-1-(5-phospho-D-ribosyl)imidazole-4-carboxamide from 5-amino-1-(5-phospho-D-ribosyl)imidazole-4-carboxylate: step 1/2. The polypeptide is Phosphoribosylaminoimidazole-succinocarboxamide synthase (Rhodococcus erythropolis (strain PR4 / NBRC 100887)).